The chain runs to 700 residues: Elongation factor G (700 aa).

The tr-type G domain maps to 13 to 288; that stretch reads SKIRNIGITA…AVIDYLPAPD (276 aa). GTP-binding positions include 22–29, 86–90, and 140–143; these read AHIDAGKT, DTPGH, and NKLD.

This sequence belongs to the TRAFAC class translation factor GTPase superfamily. Classic translation factor GTPase family. EF-G/EF-2 subfamily.

Its subcellular location is the cytoplasm. Its function is as follows. Catalyzes the GTP-dependent ribosomal translocation step during translation elongation. During this step, the ribosome changes from the pre-translocational (PRE) to the post-translocational (POST) state as the newly formed A-site-bound peptidyl-tRNA and P-site-bound deacylated tRNA move to the P and E sites, respectively. Catalyzes the coordinated movement of the two tRNA molecules, the mRNA and conformational changes in the ribosome. The protein is Elongation factor G of Gluconobacter oxydans (strain 621H) (Gluconobacter suboxydans).